Consider the following 459-residue polypeptide: F-box protein At1g47340 (459 aa).

The F-box domain occupies 31 to 76; sequence FMVSVSLPKELILEILKRLPAKSVKRFHCVSKQWASMLSCPHFREL. Residues 434 to 459 are disordered; sequence AKIEWEEEEEEDEDEDQEKEEEDQWS. Residues 438-459 show a composition bias toward acidic residues; the sequence is WEEEEEEDEDEDQEKEEEDQWS.

This is F-box protein At1g47340 from Arabidopsis thaliana (Mouse-ear cress).